We begin with the raw amino-acid sequence, 180 residues long: O-acetyl-ADP-ribose deacetylase (180 aa).

The Macro domain occupies 1–175 (MKPQIDVIHG…LYQRLLTQRG (175 aa)). Residues 11 to 12 (DI), Asn-25, 33 to 35 (GVD), and 122 to 126 (STGVY) contribute to the substrate site. Asp-35 acts as the Proton acceptor in catalysis.

The protein belongs to the MacroD-type family. YmdB subfamily. As to quaternary structure, homodimer. Interacts with RNase III.

The catalysed reaction is 3''-O-acetyl-ADP-D-ribose + H2O = ADP-D-ribose + acetate + H(+). The enzyme catalyses 2''-O-acetyl-ADP-D-ribose + H2O = ADP-D-ribose + acetate + H(+). Functionally, deacetylates O-acetyl-ADP ribose to yield ADP-ribose and free acetate. Down-regulates ribonuclease 3 (RNase III) activity. Acts by interacting directly with the region of the ribonuclease that is required for dimerization/activation. The protein is O-acetyl-ADP-ribose deacetylase of Enterobacter cloacae subsp. cloacae (strain ATCC 13047 / DSM 30054 / NBRC 13535 / NCTC 10005 / WDCM 00083 / NCDC 279-56).